A 245-amino-acid polypeptide reads, in one-letter code: 1-(5-phosphoribosyl)-5-[(5-phosphoribosylamino)methylideneamino] imidazole-4-carboxamide isomerase 1 (245 aa).

Asp-7 serves as the catalytic Proton acceptor. Asp-129 acts as the Proton donor in catalysis.

The protein belongs to the HisA/HisF family.

Its subcellular location is the cytoplasm. The catalysed reaction is 1-(5-phospho-beta-D-ribosyl)-5-[(5-phospho-beta-D-ribosylamino)methylideneamino]imidazole-4-carboxamide = 5-[(5-phospho-1-deoxy-D-ribulos-1-ylimino)methylamino]-1-(5-phospho-beta-D-ribosyl)imidazole-4-carboxamide. It functions in the pathway amino-acid biosynthesis; L-histidine biosynthesis; L-histidine from 5-phospho-alpha-D-ribose 1-diphosphate: step 4/9. This chain is 1-(5-phosphoribosyl)-5-[(5-phosphoribosylamino)methylideneamino] imidazole-4-carboxamide isomerase 1 (hisA1), found in Photorhabdus laumondii subsp. laumondii (strain DSM 15139 / CIP 105565 / TT01) (Photorhabdus luminescens subsp. laumondii).